A 165-amino-acid chain; its full sequence is uncharacterized protein (165 aa).

Residues 1 to 17 (MIRGFFLILLFLLLAFF) form the signal peptide.

This is an uncharacterized protein from Aquifex aeolicus (strain VF5).